We begin with the raw amino-acid sequence, 480 residues long: tRNA-2-methylthio-N(6)-dimethylallyladenosine synthase (480 aa).

Positions 3–120 (KKLYIKTWGC…LPEMLNQLQH (118 aa)) constitute an MTTase N-terminal domain. [4Fe-4S] cluster contacts are provided by cysteine 12, cysteine 49, cysteine 83, cysteine 157, cysteine 161, and cysteine 164. The Radical SAM core domain maps to 143–375 (KADGASAFVS…QEQITHQALR (233 aa)). Residues 378–441 (RQMLNTEQRV…ANSLRGELVR (64 aa)) form the TRAM domain.

Belongs to the methylthiotransferase family. MiaB subfamily. As to quaternary structure, monomer. [4Fe-4S] cluster is required as a cofactor.

It localises to the cytoplasm. The catalysed reaction is N(6)-dimethylallyladenosine(37) in tRNA + (sulfur carrier)-SH + AH2 + 2 S-adenosyl-L-methionine = 2-methylsulfanyl-N(6)-dimethylallyladenosine(37) in tRNA + (sulfur carrier)-H + 5'-deoxyadenosine + L-methionine + A + S-adenosyl-L-homocysteine + 2 H(+). In terms of biological role, catalyzes the methylthiolation of N6-(dimethylallyl)adenosine (i(6)A), leading to the formation of 2-methylthio-N6-(dimethylallyl)adenosine (ms(2)i(6)A) at position 37 in tRNAs that read codons beginning with uridine. This is tRNA-2-methylthio-N(6)-dimethylallyladenosine synthase from Colwellia psychrerythraea (strain 34H / ATCC BAA-681) (Vibrio psychroerythus).